We begin with the raw amino-acid sequence, 638 residues long: Chaperone protein DnaK (638 aa).

Phosphothreonine; by autocatalysis is present on T196. Residues 592 to 638 form a disordered region; it reads ASNLYQQPGAEAGAAPQPETNGQQESKGGDGAVNAEYEVIDGDDDKK. The segment covering 597–610 has biased composition (low complexity); that stretch reads QQPGAEAGAAPQPE. Residues 629 to 638 show a composition bias toward acidic residues; that stretch reads EVIDGDDDKK.

Belongs to the heat shock protein 70 family.

Acts as a chaperone. The chain is Chaperone protein DnaK from Chlorobaculum parvum (strain DSM 263 / NCIMB 8327) (Chlorobium vibrioforme subsp. thiosulfatophilum).